Reading from the N-terminus, the 206-residue chain is Ribonuclease HII (206 aa).

The RNase H type-2 domain maps to 22 to 206; the sequence is RFICGVDEAG…ISFLKNILSL (185 aa). A divalent metal cation-binding residues include Asp28, Glu29, and Asp120.

This sequence belongs to the RNase HII family. The cofactor is Mn(2+). Mg(2+) is required as a cofactor.

The protein localises to the cytoplasm. It catalyses the reaction Endonucleolytic cleavage to 5'-phosphomonoester.. In terms of biological role, endonuclease that specifically degrades the RNA of RNA-DNA hybrids. The polypeptide is Ribonuclease HII (Caldicellulosiruptor bescii (strain ATCC BAA-1888 / DSM 6725 / KCTC 15123 / Z-1320) (Anaerocellum thermophilum)).